Consider the following 122-residue polypeptide: Large ribosomal subunit protein uL14c (122 aa).

It belongs to the universal ribosomal protein uL14 family. As to quaternary structure, part of the 50S ribosomal subunit.

Its subcellular location is the plastid. The protein resides in the chloroplast. Its function is as follows. Binds to 23S rRNA. The sequence is that of Large ribosomal subunit protein uL14c from Capsella bursa-pastoris (Shepherd's purse).